The primary structure comprises 291 residues: MFEGVFPALITPFQRNHGKNLDLDGLRSNIAHLVAAGVHGVVPCGSTGESATLSFAEHEQVVEVTMDEAGGKVPVLAGTGSNNTSEALRFTRAAKDVGADGVLVISPYYNKPNRSGLIKHYTAIADLDIPVVVYNVPGRTGQNITPDIIAELAKHPNIVGVKEASGDLGQISTIIELTRDEDFAVISGDDNLTLPILSLGGKGVISVAANIYPRPLIEMYEAAQKGDYETAREIHFKYSPLFRAMFYESNPIPVKKAAEILGMAAGPLRLPLDEASEQTTERLKEVLSRYD.

Thr-47 is a binding site for pyruvate. Catalysis depends on Tyr-134, which acts as the Proton donor/acceptor. The active-site Schiff-base intermediate with substrate is the Lys-162. Residue Ile-205 participates in pyruvate binding.

This sequence belongs to the DapA family. In terms of assembly, homotetramer; dimer of dimers.

It is found in the cytoplasm. The enzyme catalyses L-aspartate 4-semialdehyde + pyruvate = (2S,4S)-4-hydroxy-2,3,4,5-tetrahydrodipicolinate + H2O + H(+). The protein operates within amino-acid biosynthesis; L-lysine biosynthesis via DAP pathway; (S)-tetrahydrodipicolinate from L-aspartate: step 3/4. Catalyzes the condensation of (S)-aspartate-beta-semialdehyde [(S)-ASA] and pyruvate to 4-hydroxy-tetrahydrodipicolinate (HTPA). The sequence is that of 4-hydroxy-tetrahydrodipicolinate synthase from Methanospirillum hungatei JF-1 (strain ATCC 27890 / DSM 864 / NBRC 100397 / JF-1).